The primary structure comprises 146 residues: Large ribosomal subunit protein uL15 (146 aa).

Residues 1–54 are disordered; sequence MKLHELQPAAGSRKAPKRVGRGTGSGLGRNAGKGEKGQNARSGGGVRPGFEGGQ. Composition is skewed to gly residues over residues 21–31 and 42–52; these read RGTGSGLGRNA and SGGGVRPGFEG.

This sequence belongs to the universal ribosomal protein uL15 family. In terms of assembly, part of the 50S ribosomal subunit.

Its function is as follows. Binds to the 23S rRNA. The polypeptide is Large ribosomal subunit protein uL15 (Clostridium botulinum (strain Eklund 17B / Type B)).